Reading from the N-terminus, the 407-residue chain is Phosphopentomutase (407 aa).

6 residues coordinate Mn(2+): Asp10, Asp306, His311, Asp347, His348, and His359.

Belongs to the phosphopentomutase family. The cofactor is Mn(2+).

The protein resides in the cytoplasm. The catalysed reaction is 2-deoxy-alpha-D-ribose 1-phosphate = 2-deoxy-D-ribose 5-phosphate. It catalyses the reaction alpha-D-ribose 1-phosphate = D-ribose 5-phosphate. It functions in the pathway carbohydrate degradation; 2-deoxy-D-ribose 1-phosphate degradation; D-glyceraldehyde 3-phosphate and acetaldehyde from 2-deoxy-alpha-D-ribose 1-phosphate: step 1/2. In terms of biological role, isomerase that catalyzes the conversion of deoxy-ribose 1-phosphate (dRib-1-P) and ribose 1-phosphate (Rib-1-P) to deoxy-ribose 5-phosphate (dRib-5-P) and ribose 5-phosphate (Rib-5-P), respectively. The sequence is that of Phosphopentomutase from Salmonella paratyphi C (strain RKS4594).